The primary structure comprises 127 residues: Large ribosomal subunit protein mL55 (127 aa).

The N-terminal 32 residues, methionine 1–alanine 32, are a transit peptide targeting the mitochondrion. Serine 84 carries the phosphoserine modification.

This sequence belongs to the mitochondrion-specific ribosomal protein mL55 family. Component of the mitochondrial ribosome large subunit (39S) which comprises a 16S rRNA and about 50 distinct proteins.

Its subcellular location is the mitochondrion. This Mus musculus (Mouse) protein is Large ribosomal subunit protein mL55 (Mrpl55).